The following is a 327-amino-acid chain: Putative HTH-type transcriptional regulatory protein Mbar_A2318 (327 aa).

Positions 132–190 constitute an HTH cro/C1-type domain; it reads LKKARMGQSMSLGTLASMVGVSRRTISKYEEEGMDASIDVVLQLEDIFGVELAKPINIL. Residues 143-162 constitute a DNA-binding region (H-T-H motif); sequence LGTLASMVGVSRRTISKYEE.

The sequence is that of Putative HTH-type transcriptional regulatory protein Mbar_A2318 from Methanosarcina barkeri (strain Fusaro / DSM 804).